A 294-amino-acid polypeptide reads, in one-letter code: Homeobox-leucine zipper protein ATHB-16 (294 aa).

Residues 1-20 show a composition bias toward polar residues; the sequence is MKRLSSSDSMCGLISTSTDE. Residues 1–31 form a disordered region; that stretch reads MKRLSSSDSMCGLISTSTDEQSPRGYGSNYQ. A DNA-binding region (homeobox) is located at residues 56 to 115; it reads LSEKKRRLKVDQVKALEKNFELENKLEPERKTKLAQELGLQPRQVAVWFQNRRARWKTKQ. Residues 116–151 are leucine-zipper; the sequence is LEKDYGVLKGQYDSLRHNFDSLRRDNDSLLQEISKI. The span at 219–238 shows a compositional bias: polar residues; it reads SSDSCDSSAVLNDETSSDNG. Residues 219-241 are disordered; that stretch reads SSDSCDSSAVLNDETSSDNGRLT.

Belongs to the HD-ZIP homeobox family. Class I subfamily. In terms of tissue distribution, widely expressed with a lower level in siliques.

It is found in the nucleus. Its function is as follows. Probable transcription factor that may function as a negative regulator of the flowering time response to photoperiod. May act to repress cell expansion during plant development. The sequence is that of Homeobox-leucine zipper protein ATHB-16 (ATHB-16) from Arabidopsis thaliana (Mouse-ear cress).